The following is a 147-amino-acid chain: Nucleoside diphosphate kinase (147 aa).

Lys11, Phe59, Arg87, Thr93, Arg104, and Asn114 together coordinate ATP. The active-site Pros-phosphohistidine intermediate is His117.

Belongs to the NDK family. In terms of assembly, homotetramer. It depends on Mg(2+) as a cofactor.

The protein localises to the cytoplasm. It carries out the reaction a 2'-deoxyribonucleoside 5'-diphosphate + ATP = a 2'-deoxyribonucleoside 5'-triphosphate + ADP. The enzyme catalyses a ribonucleoside 5'-diphosphate + ATP = a ribonucleoside 5'-triphosphate + ADP. Functionally, major role in the synthesis of nucleoside triphosphates other than ATP. The ATP gamma phosphate is transferred to the NDP beta phosphate via a ping-pong mechanism, using a phosphorylated active-site intermediate. This Anaeromyxobacter dehalogenans (strain 2CP-1 / ATCC BAA-258) protein is Nucleoside diphosphate kinase.